The sequence spans 467 residues: Chromosomal replication initiator protein DnaA (467 aa).

Positions 1–84 (MDISLDQLWD…LQVEFSVSPH (84 aa)) are domain I, interacts with DnaA modulators. Residues 84 to 125 (HASVEAEPPSRAISPTSGRAGSLPASTTLGLEVGGSLPMRAP) form a domain II region. The tract at residues 89–108 (AEPPSRAISPTSGRAGSLPA) is disordered. Polar residues predominate over residues 96-108 (ISPTSGRAGSLPA). The tract at residues 126 to 342 (DLNPKYSFSR…GALIRAVAYV (217 aa)) is domain III, AAA+ region. The ATP site is built by glycine 170, glycine 172, lysine 173, and threonine 174. The domain IV, binds dsDNA stretch occupies residues 343–467 (SISGLPMSVE…LRVVANSRSS (125 aa)).

It belongs to the DnaA family. In terms of assembly, oligomerizes as a right-handed, spiral filament on DNA at oriC.

Its subcellular location is the cytoplasm. Its function is as follows. Plays an essential role in the initiation and regulation of chromosomal replication. ATP-DnaA binds to the origin of replication (oriC) to initiate formation of the DNA replication initiation complex once per cell cycle. Binds the DnaA box (a 9 base pair repeat at the origin) and separates the double-stranded (ds)DNA. Forms a right-handed helical filament on oriC DNA; dsDNA binds to the exterior of the filament while single-stranded (ss)DNA is stabiized in the filament's interior. The ATP-DnaA-oriC complex binds and stabilizes one strand of the AT-rich DNA unwinding element (DUE), permitting loading of DNA polymerase. After initiation quickly degrades to an ADP-DnaA complex that is not apt for DNA replication. Binds acidic phospholipids. The polypeptide is Chromosomal replication initiator protein DnaA (Synechococcus sp. (strain JA-2-3B'a(2-13)) (Cyanobacteria bacterium Yellowstone B-Prime)).